Consider the following 277-residue polypeptide: MEYQHWLREAISQLQASESPRRDAEILLEHVTGRGRTFILAFGETQLTDEQCQQLDALLTRRRDGEPIAHLTGVREFWSLPLFVSPATLIPRPDTECLVEQALARLPEQPCRILDLGTGTGAIALALASERPDCEIIAVDRMPDAVSLAQRNAQHLAIKNIHILQSDWFSALAGQQFAMIVSNPPYIDEQDPHLQQGDVRFEPLTALVAADSGMADIVHIIEQSRNALVSGGFLLLEHGWQQGEAVRQAFILAGYHDVETCRDYGDNERVTLGRYYQ.

S-adenosyl-L-methionine is bound by residues G117 to G121, D140, W168, and N183. N183 to Y186 is a binding site for substrate.

It belongs to the protein N5-glutamine methyltransferase family. PrmC subfamily.

The enzyme catalyses L-glutaminyl-[peptide chain release factor] + S-adenosyl-L-methionine = N(5)-methyl-L-glutaminyl-[peptide chain release factor] + S-adenosyl-L-homocysteine + H(+). Methylates the class 1 translation termination release factors RF1/PrfA and RF2/PrfB on the glutamine residue of the universally conserved GGQ motif. This Shigella flexneri protein is Release factor glutamine methyltransferase.